The primary structure comprises 274 residues: MTGFGARLAAAKAQRGPLCVGIDPHPELLRAWDLPTTADGLAAFCDICVEAFAGFAVVKPQVAFFEAYGAAGFAVLERTIAALRSAGVLVLADAKRGDIGTTMAAYAAAWAGDSPLAADAVTASPYLGFGSLRPLLEAAAAHDRGVFVLAATSNPEGATVQRAAFDGRTVAQLVVDQAAVVNRSTNPAGPGYVGVVVGATVLQPPDLSALGGPVLVPGLGVQGGRPEALAGLGGAEPGQLLPAVAREVLRAGPDVAELRAAADRMLDAVAYLDA.

Lysine 95 (proton donor) is an active-site residue.

The protein belongs to the OMP decarboxylase family. Type 2 subfamily.

It catalyses the reaction orotidine 5'-phosphate + H(+) = UMP + CO2. The protein operates within pyrimidine metabolism; UMP biosynthesis via de novo pathway; UMP from orotate: step 2/2. In Mycolicibacterium paratuberculosis (strain ATCC BAA-968 / K-10) (Mycobacterium paratuberculosis), this protein is Orotidine 5'-phosphate decarboxylase.